Consider the following 320-residue polypeptide: MIKRIGVLTSGGDAPGMNAAIRGVVRTALSRNLEVFGIYDGYLGLYENRMILLDRYSVSDIINKGGTFLGSARFSNFFKKDIRSIAIKNMQQRNIDFLVVIGGDGSYVGAQKLTEMGFPCISIPGTIDNDVAGTDYTIGYFTALETVVEAIDRLRDTSSSHQRISIVEVMGRNCGDLTLSAAIAGGCEFIVLPEIEFTKEELVKEIKNGIKKGKKHAIVAITEYICNVEKLAKYIQRETCRETRATILGHIQRGGAPVVYDRILASRMGEYSVDILLQGFQGRCIGTINEKMVHHDISDALKNMKRPFKFDWLKTAKQLY.

Glycine 12 contributes to the ATP binding site. ADP-binding positions include 22–26 (RGVVR) and 55–60 (RYSVSD). ATP-binding positions include 73 to 74 (RF) and 103 to 106 (GDGS). Position 104 (aspartate 104) interacts with Mg(2+). Substrate is bound at residue 126 to 128 (TID). The active-site Proton acceptor is aspartate 128. Position 155 (arginine 155) interacts with ADP. Substrate contacts are provided by residues arginine 163 and 170–172 (MGR). ADP is bound by residues 186-188 (GCE), lysine 212, and 214-216 (KKH). Residues glutamate 223, arginine 244, and 250–253 (HIQR) contribute to the substrate site.

The protein belongs to the phosphofructokinase type A (PFKA) family. ATP-dependent PFK group I subfamily. Prokaryotic clade 'B1' sub-subfamily. As to quaternary structure, homotetramer. The cofactor is Mg(2+).

Its subcellular location is the cytoplasm. The catalysed reaction is beta-D-fructose 6-phosphate + ATP = beta-D-fructose 1,6-bisphosphate + ADP + H(+). Its pathway is carbohydrate degradation; glycolysis; D-glyceraldehyde 3-phosphate and glycerone phosphate from D-glucose: step 3/4. With respect to regulation, allosterically activated by ADP and other diphosphonucleosides, and allosterically inhibited by phosphoenolpyruvate. In terms of biological role, catalyzes the phosphorylation of D-fructose 6-phosphate to fructose 1,6-bisphosphate by ATP, the first committing step of glycolysis. The chain is ATP-dependent 6-phosphofructokinase from Buchnera aphidicola subsp. Baizongia pistaciae (strain Bp).